Consider the following 159-residue polypeptide: Sulfur carrier protein DsrE2 (159 aa).

The next 2 membrane-spanning stretches (helical) occupy residues 21-43 (PFIL…TFYG) and 72-91 (WFPV…TAMM).

It localises to the cell membrane. It functions in the pathway energy metabolism; sulfur metabolism. Functionally, sulfur carrier protein probably involved in sulfur trafficking for oxidative dissimilatory sulfur metabolism. May be a component of a cytoplasmic sulfur relay system delivering sulfur to DsrC. Binds sulfur in the presence of sulfide in vitro. This is Sulfur carrier protein DsrE2 from Allochromatium vinosum (strain ATCC 17899 / DSM 180 / NBRC 103801 / NCIMB 10441 / D) (Chromatium vinosum).